The following is a 539-amino-acid chain: 3-methylmercaptopropionyl-CoA ligase (539 aa).

T185 is a Mg(2+) binding site. ATP is bound by residues H231, G303, H324, A325, and S329. Residue E330 participates in Mg(2+) binding. Positions 359, 417, 432, and 523 each coordinate ATP.

The protein belongs to the ATP-dependent AMP-binding enzyme family. Homodimer. Requires Mg(2+) as cofactor.

The catalysed reaction is 3-(methylsulfanyl)propanoate + ATP + CoA = 3-(methylsulfanyl)propanoyl-CoA + AMP + diphosphate. With respect to regulation, ADP acts as a competitive inhibitor and inhibits the ligase activity. Involved in the assimilation of dimethylsulphoniopropionate (DMSP), an important compound in the fixation of carbon in marine phytoplankton. Catalyzes the ATP-dependent ligation of methylmercaptopropionate (MMPA) and CoA to yield methylmercaptopropionate-CoA (MMPA-CoA). The protein is 3-methylmercaptopropionyl-CoA ligase of Ruegeria lacuscaerulensis (strain DSM 11314 / KCTC 2953 / ITI-1157) (Silicibacter lacuscaerulensis).